The following is a 358-amino-acid chain: Histidinol-phosphate aminotransferase (358 aa).

N6-(pyridoxal phosphate)lysine is present on Lys221.

Belongs to the class-II pyridoxal-phosphate-dependent aminotransferase family. Histidinol-phosphate aminotransferase subfamily. Homodimer. Requires pyridoxal 5'-phosphate as cofactor.

The enzyme catalyses L-histidinol phosphate + 2-oxoglutarate = 3-(imidazol-4-yl)-2-oxopropyl phosphate + L-glutamate. It participates in amino-acid biosynthesis; L-histidine biosynthesis; L-histidine from 5-phospho-alpha-D-ribose 1-diphosphate: step 7/9. This is Histidinol-phosphate aminotransferase from Caldicellulosiruptor saccharolyticus (strain ATCC 43494 / DSM 8903 / Tp8T 6331).